Here is a 404-residue protein sequence, read N- to C-terminus: Probable tRNA sulfurtransferase (404 aa).

In terms of domain architecture, THUMP spans 60-165 (TAVAESLKQV…EEAAYLSYET (106 aa)). ATP is bound by residues 183–184 (ML), 208–209 (HF), Arg265, Gly287, and Gln296.

It belongs to the ThiI family.

The protein localises to the cytoplasm. The catalysed reaction is [ThiI sulfur-carrier protein]-S-sulfanyl-L-cysteine + a uridine in tRNA + 2 reduced [2Fe-2S]-[ferredoxin] + ATP + H(+) = [ThiI sulfur-carrier protein]-L-cysteine + a 4-thiouridine in tRNA + 2 oxidized [2Fe-2S]-[ferredoxin] + AMP + diphosphate. It carries out the reaction [ThiS sulfur-carrier protein]-C-terminal Gly-Gly-AMP + S-sulfanyl-L-cysteinyl-[cysteine desulfurase] + AH2 = [ThiS sulfur-carrier protein]-C-terminal-Gly-aminoethanethioate + L-cysteinyl-[cysteine desulfurase] + A + AMP + 2 H(+). The protein operates within cofactor biosynthesis; thiamine diphosphate biosynthesis. Functionally, catalyzes the ATP-dependent transfer of a sulfur to tRNA to produce 4-thiouridine in position 8 of tRNAs, which functions as a near-UV photosensor. Also catalyzes the transfer of sulfur to the sulfur carrier protein ThiS, forming ThiS-thiocarboxylate. This is a step in the synthesis of thiazole, in the thiamine biosynthesis pathway. The sulfur is donated as persulfide by IscS. In Streptococcus pneumoniae serotype 19F (strain G54), this protein is Probable tRNA sulfurtransferase.